We begin with the raw amino-acid sequence, 635 residues long: 1-deoxy-D-xylulose-5-phosphate synthase (635 aa).

Thiamine diphosphate is bound by residues histidine 78 and 119–121; that span reads GHA. Aspartate 150 provides a ligand contact to Mg(2+). Residues 151–152, asparagine 179, phenylalanine 291, and glutamate 376 each bind thiamine diphosphate; that span reads GS. A Mg(2+)-binding site is contributed by asparagine 179.

It belongs to the transketolase family. DXPS subfamily. Homodimer. Mg(2+) is required as a cofactor. Requires thiamine diphosphate as cofactor.

The enzyme catalyses D-glyceraldehyde 3-phosphate + pyruvate + H(+) = 1-deoxy-D-xylulose 5-phosphate + CO2. Its pathway is metabolic intermediate biosynthesis; 1-deoxy-D-xylulose 5-phosphate biosynthesis; 1-deoxy-D-xylulose 5-phosphate from D-glyceraldehyde 3-phosphate and pyruvate: step 1/1. Functionally, catalyzes the acyloin condensation reaction between C atoms 2 and 3 of pyruvate and glyceraldehyde 3-phosphate to yield 1-deoxy-D-xylulose-5-phosphate (DXP). The polypeptide is 1-deoxy-D-xylulose-5-phosphate synthase (Chlorobaculum tepidum (strain ATCC 49652 / DSM 12025 / NBRC 103806 / TLS) (Chlorobium tepidum)).